The primary structure comprises 174 residues: U1 small nuclear ribonucleoprotein C (174 aa).

The segment at 4–36 (YYCDYCDKYLTHDSPSVRKSHTVGKQHKLAVQL) adopts a Matrin-type zinc-finger fold. Low complexity-rich tracts occupy residues 82-109 (QQQQ…QQGM) and 122-140 (PHQF…FQPP). The segment at 82-174 (QQQQQQQQQQ…QHNQPTIPGL (93 aa)) is disordered. Over residues 141–163 (HHQHHPHQQHQQHQQHQHQHQHQ) the composition is skewed to basic residues. A compositionally biased stretch (low complexity) spans 164–174 (QQHNQPTIPGL).

It belongs to the U1 small nuclear ribonucleoprotein C family. In terms of assembly, component of the U1 snRNP. The U1 snRNP is composed of the U1 snRNA and the 7 core Sm proteins SNRPB, SNRPD1, SNRPD2, SNRPD3, SNRPE, SNRPF and SNRPG that assemble in a heptameric protein ring on the Sm site of the small nuclear RNA to form the core snRNP, and at least 3 U1 snRNP-specific proteins SNRNP70/U1-70K, SNRPA/U1-A and SNRPC/U1-C. SNRPC/U1-C interacts with U1 snRNA and the 5' splice-site region of the pre-mRNA.

The protein localises to the nucleus. In terms of biological role, component of the spliceosomal U1 snRNP, which is essential for recognition of the pre-mRNA 5' splice-site and the subsequent assembly of the spliceosome. SNRPC/U1-C is directly involved in initial 5' splice-site recognition for both constitutive and regulated alternative splicing. The interaction with the 5' splice-site seems to precede base-pairing between the pre-mRNA and the U1 snRNA. Stimulates commitment or early (E) complex formation by stabilizing the base pairing of the 5' end of the U1 snRNA and the 5' splice-site region. In Dictyostelium discoideum (Social amoeba), this protein is U1 small nuclear ribonucleoprotein C.